Here is a 764-residue protein sequence, read N- to C-terminus: Elongation factor G, mitochondrial (764 aa).

A mitochondrion-targeting transit peptide spans 1-23 (MIRSLRAVSRLGARGFSSFAAAR). Residues 56–337 (ARMRNIGISA…AICEYLPDPS (282 aa)) enclose the tr-type G domain. Residues 65–72 (AHIDSGKT), 136–140 (DTPGH), and 190–193 (NKMD) each bind GTP.

The protein belongs to the TRAFAC class translation factor GTPase superfamily. Classic translation factor GTPase family. EF-G/EF-2 subfamily.

It is found in the mitochondrion. The protein operates within protein biosynthesis; polypeptide chain elongation. Functionally, mitochondrial GTPase that catalyzes the GTP-dependent ribosomal translocation step during translation elongation. During this step, the ribosome changes from the pre-translocational (PRE) to the post-translocational (POST) state as the newly formed A-site-bound peptidyl-tRNA and P-site-bound deacylated tRNA move to the P and E sites, respectively. Catalyzes the coordinated movement of the two tRNA molecules, the mRNA and conformational changes in the ribosome. This Yarrowia lipolytica (strain CLIB 122 / E 150) (Yeast) protein is Elongation factor G, mitochondrial.